A 385-amino-acid chain; its full sequence is Benzoylsuccinyl-CoA thiolase subunit BbsB (385 aa).

Arg-19 provides a ligand contact to CoA. Catalysis depends on Cys-84, which acts as the Acyl-thioester intermediate. Residues Gly-121, Arg-193, Cys-204, and Cys-205 each coordinate CoA.

The protein belongs to the thiolase-like superfamily. Thiolase family. As to quaternary structure, heterotetramer composed of two BbsA subunits and two BbsB subunits. BbsB forms homodimeric subcomplexes. Both BbsA and BbsB are essential for enzymatic activity.

It carries out the reaction (S)-2-benzoylsuccinyl-CoA + CoA = benzoyl-CoA + succinyl-CoA. The protein operates within xenobiotic degradation; toluene degradation. Component of the BbsAB thiolase complex, which catalyzes the thiolytic cleavage of (S)-2-benzoylsuccinyl-CoA to succinyl-CoA and benzoyl-CoA, the final step of anaerobic toluene metabolism. This Thauera aromatica protein is Benzoylsuccinyl-CoA thiolase subunit BbsB.